A 600-amino-acid chain; its full sequence is DNA ligase (600 aa).

Asp259 lines the ATP pocket. Lys261 (N6-AMP-lysine intermediate) is an active-site residue. Positions 266, 281, 311, 351, 428, and 434 each coordinate ATP.

Belongs to the ATP-dependent DNA ligase family. Mg(2+) is required as a cofactor.

The enzyme catalyses ATP + (deoxyribonucleotide)n-3'-hydroxyl + 5'-phospho-(deoxyribonucleotide)m = (deoxyribonucleotide)n+m + AMP + diphosphate.. In terms of biological role, DNA ligase that seals nicks in double-stranded DNA during DNA replication, DNA recombination and DNA repair. This Acidianus ambivalens (Desulfurolobus ambivalens) protein is DNA ligase.